We begin with the raw amino-acid sequence, 112 residues long: Colipase (112 aa).

Positions 1-17 are cleaved as a signal peptide; it reads MEKILILLLVALSVAYA. A propeptide spans 18-22 (enterostatin, activation peptide); the sequence is APGPR. Intrachain disulfides connect Cys34/Cys45, Cys40/Cys56, Cys44/Cys78, Cys66/Cys86, and Cys80/Cys104.

It belongs to the colipase family. Forms a 1:1 stoichiometric complex with pancreatic lipase. Expressed by the pancreas.

The protein resides in the secreted. Its function is as follows. Colipase is a cofactor of pancreatic lipase. It allows the lipase to anchor itself to the lipid-water interface. Without colipase the enzyme is washed off by bile salts, which have an inhibitory effect on the lipase. In terms of biological role, enterostatin has a biological activity as a satiety signal. The sequence is that of Colipase from Homo sapiens (Human).